Reading from the N-terminus, the 39-residue chain is U-limacoditoxin(13)-As54 (39 aa).

Positions 1–23 (MSKYIVLLVVSAIALLQFSMIEC) are cleaved as a signal peptide. Phenylalanine amide is present on Phe37.

This sequence belongs to the FARP (FMRFamide related peptide) family. In terms of tissue distribution, expressed by the venom secretory cell of the spine. The spine is a cuticular structure containing a single large nucleated venom-secreting cell at its base. It is an independent unit capable of producing, storing and injecting venom. On the back of A.stimulea caterpillars, spines are grouped together by 50 to 100 to form scoli, of which there are eight.

The protein resides in the secreted. Strongly activates (at 30 uM) the human neuropeptide FF receptor 1 (NPFF1R), a G-protein coupled receptor, with an effect that is equipotent to the endogenous RFRP-1 ligand in activating NPFFR1. Is toxic when injected into Drosophila melanogaster. Also shows a moderate anthelmintic activity against the parasitic nematode H.contortus (drug susceptible Kirby isolate) (IC(50)=20.1 uM). This Acharia stimulea (Saddleback caterpillar moth) protein is U-limacoditoxin(13)-As54.